The chain runs to 431 residues: MQNIHFIGIGGIGISALARFLKEKGFKISGSDLKESKITKELEKEGVKVSIPHHKDNILNKDLVIYSAAIKEENPEFKYAKELGIKCLSRKEALPLILEDKRVFAVAGAHGKSTTSSILASLLDDASVIIGAILKEFGSNMIYKESQNLVFEADESDSSFLNSNPYLAIVTNAEAEHLDHYGNEVSKLHHAYTQFLDVAKIRVINAEDEFLKNYKNESIKLYPSKDIKNCTMCIENFKPFTSFELKDLGEFKVFGMGYHLALDASLAILAALNFLDIETIRTRLKNYQGIKKRFDILHADENLVLIDDYGHHPTEIKATLSAAQEYVKLGGYKKITAIFEPHRYTRLATNLKEFAKAFEGVDELVILPVYAAGEEPIELDLKAVFPKALFVEDIKREGKFLVASKGQVFEEGLIIGFGAGDISNKLRQKNE.

108-114 lines the ATP pocket; that stretch reads GAHGKST.

This sequence belongs to the MurCDEF family.

The protein localises to the cytoplasm. The enzyme catalyses UDP-N-acetyl-alpha-D-muramate + L-alanine + ATP = UDP-N-acetyl-alpha-D-muramoyl-L-alanine + ADP + phosphate + H(+). It functions in the pathway cell wall biogenesis; peptidoglycan biosynthesis. Functionally, cell wall formation. In Campylobacter jejuni subsp. jejuni serotype O:23/36 (strain 81-176), this protein is UDP-N-acetylmuramate--L-alanine ligase.